The chain runs to 489 residues: Lysine--tRNA ligase (489 aa).

Positions 399 and 406 each coordinate Mg(2+).

Belongs to the class-II aminoacyl-tRNA synthetase family. Homodimer. Mg(2+) is required as a cofactor.

It is found in the cytoplasm. The catalysed reaction is tRNA(Lys) + L-lysine + ATP = L-lysyl-tRNA(Lys) + AMP + diphosphate. This is Lysine--tRNA ligase from Synechococcus sp. (strain CC9311).